A 190-amino-acid polypeptide reads, in one-letter code: Threonylcarbamoyl-AMP synthase (190 aa).

One can recognise a YrdC-like domain in the interval 7-190 (LSSLIKCIRK…IVNGKLIRYV (184 aa)).

It belongs to the SUA5 family. TsaC subfamily.

It is found in the cytoplasm. The catalysed reaction is L-threonine + hydrogencarbonate + ATP = L-threonylcarbamoyladenylate + diphosphate + H2O. Functionally, required for the formation of a threonylcarbamoyl group on adenosine at position 37 (t(6)A37) in tRNAs that read codons beginning with adenine. Catalyzes the conversion of L-threonine, HCO(3)(-)/CO(2) and ATP to give threonylcarbamoyl-AMP (TC-AMP) as the acyladenylate intermediate, with the release of diphosphate. The sequence is that of Threonylcarbamoyl-AMP synthase from Buchnera aphidicola subsp. Schizaphis graminum (strain Sg).